The following is a 355-amino-acid chain: Phenylalanine--tRNA ligase alpha subunit (355 aa).

Glu273 contacts Mg(2+).

It belongs to the class-II aminoacyl-tRNA synthetase family. Phe-tRNA synthetase alpha subunit type 1 subfamily. In terms of assembly, tetramer of two alpha and two beta subunits. The cofactor is Mg(2+).

Its subcellular location is the cytoplasm. The enzyme catalyses tRNA(Phe) + L-phenylalanine + ATP = L-phenylalanyl-tRNA(Phe) + AMP + diphosphate + H(+). In Bifidobacterium longum (strain NCC 2705), this protein is Phenylalanine--tRNA ligase alpha subunit.